The sequence spans 263 residues: Protein STK_14130 (263 aa).

It belongs to the CinA family.

This chain is Protein STK_14130, found in Sulfurisphaera tokodaii (strain DSM 16993 / JCM 10545 / NBRC 100140 / 7) (Sulfolobus tokodaii).